We begin with the raw amino-acid sequence, 535 residues long: Formate--tetrahydrofolate ligase (535 aa).

T50–T57 lines the ATP pocket.

The protein belongs to the formate--tetrahydrofolate ligase family.

It catalyses the reaction (6S)-5,6,7,8-tetrahydrofolate + formate + ATP = (6R)-10-formyltetrahydrofolate + ADP + phosphate. It functions in the pathway one-carbon metabolism; tetrahydrofolate interconversion. The sequence is that of Formate--tetrahydrofolate ligase from Picrophilus torridus (strain ATCC 700027 / DSM 9790 / JCM 10055 / NBRC 100828 / KAW 2/3).